Here is a 225-residue protein sequence, read N- to C-terminus: ATP synthase subunit a (225 aa).

The next 5 membrane-spanning stretches (helical) occupy residues 16-36 (LFVY…VAKL), 79-99 (LVAT…IPGF), 105-125 (SLNL…FEGI), 176-196 (LFLL…AYAL), and 202-222 (VLQT…AVAI).

The protein belongs to the ATPase A chain family. In terms of assembly, F-type ATPases have 2 components, CF(1) - the catalytic core - and CF(0) - the membrane proton channel. CF(1) has five subunits: alpha(3), beta(3), gamma(1), delta(1), epsilon(1). CF(0) has three main subunits: a(1), b(2) and c(9-12). The alpha and beta chains form an alternating ring which encloses part of the gamma chain. CF(1) is attached to CF(0) by a central stalk formed by the gamma and epsilon chains, while a peripheral stalk is formed by the delta and b chains.

It localises to the cell inner membrane. In terms of biological role, key component of the proton channel; it plays a direct role in the translocation of protons across the membrane. In Campylobacter curvus (strain 525.92), this protein is ATP synthase subunit a.